The sequence spans 290 residues: Appressorium protein ROW2 (290 aa).

An N-terminal signal peptide occupies residues 1–19 (MFTKSVFIALVAGVLGVTA). The segment at 266–290 (AIKTPSKRSVMATHVKRSPEWEEEP) is disordered.

It is found in the secreted. The protein resides in the nucleus. Functionally, plays a role in the formation of the appressorium, a specialized infection structure with the purpose of penetrating the host surface, and is required for proper remodeling of the appressorium wall and vesicle secretion. The chain is Appressorium protein ROW2 from Mycosarcoma maydis (Corn smut fungus).